Consider the following 127-residue polypeptide: Glycine cleavage system H protein (127 aa).

In terms of domain architecture, Lipoyl-binding spans 24–105 (TVKVGISDHA…PYEAWLFAVR (82 aa)). Position 65 is an N6-lipoyllysine (K65).

The protein belongs to the GcvH family. In terms of assembly, the glycine cleavage system is composed of four proteins: P, T, L and H. (R)-lipoate is required as a cofactor.

In terms of biological role, the glycine cleavage system catalyzes the degradation of glycine. The H protein shuttles the methylamine group of glycine from the P protein to the T protein. The sequence is that of Glycine cleavage system H protein from Methylococcus capsulatus (strain ATCC 33009 / NCIMB 11132 / Bath).